The chain runs to 173 residues: Protein SHI RELATED SEQUENCE 8 (173 aa).

Cysteine 52, cysteine 63, cysteine 68, cysteine 72, and cysteine 79 together coordinate Zn(2+). Positions 52–79 form a DNA-binding region, zn(2)-C6 fungal-type; degenerate; it reads CQDFGNQAKKDCSHMRCRTCCKSRGFEC. The segment covering 100 to 110 has biased composition (low complexity); the sequence is LATVQPQTQLP. Positions 100-121 are disordered; that stretch reads LATVQPQTQLPRGESVPKRHRE.

Belongs to the SHI protein family.

The protein resides in the nucleus. In terms of biological role, transcription activator that binds DNA on 5'-ACTCTAC-3' and promotes auxin homeostasis-regulating gene expression (e.g. YUC genes), as well as genes affecting stamen development, cell expansion and timing of flowering. Synergistically with other SHI-related proteins, regulates gynoecium, stamen and leaf development in a dose-dependent manner, controlling apical-basal patterning. Promotes style and stigma formation, and influence vascular development during gynoecium development. May also have a role in the formation and/or maintenance of the shoot apical meristem (SAM). The polypeptide is Protein SHI RELATED SEQUENCE 8 (SRS8) (Arabidopsis thaliana (Mouse-ear cress)).